Here is a 321-residue protein sequence, read N- to C-terminus: Olfactory receptor 52N4 (321 aa).

The Extracellular portion of the chain corresponds to 1–27; sequence MLTLNKTDLIPASFILNGVPGLEDTQL. Asn5 carries an N-linked (GlcNAc...) asparagine glycan. Residues 28–48 traverse the membrane as a helical segment; that stretch reads WISFPFCSMYVVAMVGNCGLL. Residues 49 to 56 lie on the Cytoplasmic side of the membrane; the sequence is YLIHYEDA. Residues 57–77 form a helical membrane-spanning segment; that stretch reads LHKPMYYFLAMLSFTDLVMCS. Topologically, residues 78–101 are extracellular; that stretch reads STIPKALCIFWFHLKDIGFDECLV. Cys99 and Cys191 are disulfide-bonded. Residues 102–122 form a helical membrane-spanning segment; the sequence is QMFFTHTFTGMESGVLMLMAL. Topologically, residues 123–141 are cytoplasmic; the sequence is DRYVAICYPLRYSTILTNP. Residues 142–162 form a helical membrane-spanning segment; the sequence is VIAKVGTATFLRGVLLIIPFT. Residues 163 to 198 are Extracellular-facing; sequence FLTKLLPYCRGNILPHTYCDHMSVAKLSCGNVKVNA. Residues 199–219 form a helical membrane-spanning segment; sequence IYGLMVALLIWGFDILCITNS. Topologically, residues 220–239 are cytoplasmic; the sequence is YTMILRAVVSLSSADARQKA. Residues 240 to 260 form a helical membrane-spanning segment; it reads FNTCTAHICAIVFSYTPAFFS. Topologically, residues 261–276 are extracellular; sequence FFSHRFGEHIIPPSCH. The chain crosses the membrane as a helical span at residues 277 to 297; that stretch reads IIVANIYLLLPPTMNPIVYGV. Over 298–321 the chain is Cytoplasmic; it reads KTKQIRDCVIRILSGSKDTKSYSM.

This sequence belongs to the G-protein coupled receptor 1 family.

It localises to the cell membrane. Its function is as follows. Odorant receptor. This Homo sapiens (Human) protein is Olfactory receptor 52N4 (OR52N4).